Consider the following 868-residue polypeptide: DNA mismatch repair protein MutS (868 aa).

623 to 630 (GPNMAGKS) contributes to the ATP binding site.

Belongs to the DNA mismatch repair MutS family.

Its function is as follows. This protein is involved in the repair of mismatches in DNA. It is possible that it carries out the mismatch recognition step. This protein has a weak ATPase activity. This is DNA mismatch repair protein MutS from Magnetococcus marinus (strain ATCC BAA-1437 / JCM 17883 / MC-1).